Consider the following 402-residue polypeptide: CCA-adding enzyme (402 aa).

The ATP site is built by Gly32 and Arg35. CTP contacts are provided by Gly32 and Arg35. Mg(2+) contacts are provided by Asp45 and Asp47. Arg116, Asp159, Arg162, Arg165, and Arg168 together coordinate ATP. CTP is bound by residues Arg116, Asp159, Arg162, Arg165, and Arg168.

Belongs to the tRNA nucleotidyltransferase/poly(A) polymerase family. Bacterial CCA-adding enzyme type 3 subfamily. Homodimer. Mg(2+) serves as cofactor.

It carries out the reaction a tRNA precursor + 2 CTP + ATP = a tRNA with a 3' CCA end + 3 diphosphate. The catalysed reaction is a tRNA with a 3' CCA end + 2 CTP + ATP = a tRNA with a 3' CCACCA end + 3 diphosphate. In terms of biological role, catalyzes the addition and repair of the essential 3'-terminal CCA sequence in tRNAs without using a nucleic acid template. Adds these three nucleotides in the order of C, C, and A to the tRNA nucleotide-73, using CTP and ATP as substrates and producing inorganic pyrophosphate. tRNA 3'-terminal CCA addition is required both for tRNA processing and repair. Also involved in tRNA surveillance by mediating tandem CCA addition to generate a CCACCA at the 3' terminus of unstable tRNAs. While stable tRNAs receive only 3'-terminal CCA, unstable tRNAs are marked with CCACCA and rapidly degraded. This is CCA-adding enzyme from Streptococcus pyogenes serotype M2 (strain MGAS10270).